A 703-amino-acid chain; its full sequence is Polyribonucleotide nucleotidyltransferase (703 aa).

Positions 484 and 490 each coordinate Mg(2+). The KH domain maps to 551 to 610 (PTVTTLRVLPEKISVIIGPAGKNIKKIIEETGVKIDLDPTGLVKIYATSKIAAEKAIDMI). One can recognise an S1 motif domain in the interval 620–688 (GEVYLGKVTR…DQGRIKVSLK (69 aa)).

This sequence belongs to the polyribonucleotide nucleotidyltransferase family. Mg(2+) serves as cofactor.

The protein resides in the cytoplasm. The enzyme catalyses RNA(n+1) + phosphate = RNA(n) + a ribonucleoside 5'-diphosphate. Its function is as follows. Involved in mRNA degradation. Catalyzes the phosphorolysis of single-stranded polyribonucleotides processively in the 3'- to 5'-direction. The sequence is that of Polyribonucleotide nucleotidyltransferase from Sulfurihydrogenibium sp. (strain YO3AOP1).